A 190-amino-acid polypeptide reads, in one-letter code: dCTP deaminase, dUMP-forming (190 aa).

Residues 101–106, D119, 127–129, Q148, Y162, and Q174 each bind dCTP; these read KSSLGR and TLE. E129 serves as the catalytic Proton donor/acceptor. The interval 162–184 is disordered; that stretch reads YGSAKVGSKYQGQRGPTPSRSYQ. A compositionally biased stretch (polar residues) spans 171-184; sequence YQGQRGPTPSRSYQ.

Belongs to the dCTP deaminase family. As to quaternary structure, homotrimer.

The enzyme catalyses dCTP + 2 H2O = dUMP + NH4(+) + diphosphate. Its pathway is pyrimidine metabolism; dUMP biosynthesis; dUMP from dCTP: step 1/1. In terms of biological role, bifunctional enzyme that catalyzes both the deamination of dCTP to dUTP and the hydrolysis of dUTP to dUMP without releasing the toxic dUTP intermediate. The protein is dCTP deaminase, dUMP-forming of Mycobacterium sp. (strain JLS).